Reading from the N-terminus, the 1266-residue chain is 5-oxoprolinase 1 (1266 aa).

This sequence belongs to the oxoprolinase family. As to expression, expressed in roots, stems, leaves, flowers and siliques.

Its subcellular location is the cytoplasm. It carries out the reaction 5-oxo-L-proline + ATP + 2 H2O = L-glutamate + ADP + phosphate + H(+). In terms of biological role, catalyzes the cleavage of 5-oxo-L-proline to form L-glutamate coupled to the hydrolysis of ATP to ADP and inorganic phosphate. Acts in the glutathione degradation pathway. The chain is 5-oxoprolinase 1 from Arabidopsis thaliana (Mouse-ear cress).